Consider the following 126-residue polypeptide: Holo-[acyl-carrier-protein] synthase (126 aa).

Mg(2+)-binding residues include Asp-8 and Glu-50.

Belongs to the P-Pant transferase superfamily. AcpS family. The cofactor is Mg(2+).

It is found in the cytoplasm. It carries out the reaction apo-[ACP] + CoA = holo-[ACP] + adenosine 3',5'-bisphosphate + H(+). In terms of biological role, transfers the 4'-phosphopantetheine moiety from coenzyme A to a Ser of acyl-carrier-protein. This chain is Holo-[acyl-carrier-protein] synthase, found in Micrococcus luteus (strain ATCC 4698 / DSM 20030 / JCM 1464 / CCM 169 / CCUG 5858 / IAM 1056 / NBRC 3333 / NCIMB 9278 / NCTC 2665 / VKM Ac-2230) (Micrococcus lysodeikticus).